The sequence spans 134 residues: Kinetochore-binding protein 3 (134 aa).

The protein localises to the nucleus. The protein resides in the chromosome. It is found in the centromere. It localises to the kinetochore. In Caenorhabditis elegans, this protein is Kinetochore-binding protein 3 (kbp-3).